We begin with the raw amino-acid sequence, 372 residues long: uncharacterized protein (372 aa).

This is an uncharacterized protein from Mycobacterium tuberculosis (strain CDC 1551 / Oshkosh).